We begin with the raw amino-acid sequence, 156 residues long: Small ribosomal subunit protein uS7 (156 aa).

The protein belongs to the universal ribosomal protein uS7 family. As to quaternary structure, part of the 30S ribosomal subunit. Contacts proteins S9 and S11.

One of the primary rRNA binding proteins, it binds directly to 16S rRNA where it nucleates assembly of the head domain of the 30S subunit. Is located at the subunit interface close to the decoding center, probably blocks exit of the E-site tRNA. The sequence is that of Small ribosomal subunit protein uS7 from Tropheryma whipplei (strain TW08/27) (Whipple's bacillus).